A 278-amino-acid chain; its full sequence is Thiazole synthase (278 aa).

Lysine 107 acts as the Schiff-base intermediate with DXP in catalysis. 1-deoxy-D-xylulose 5-phosphate-binding positions include glycine 168, 194–195, and 216–217; these read AG and AS.

The protein belongs to the ThiG family. As to quaternary structure, homotetramer. Forms heterodimers with either ThiH or ThiS.

Its subcellular location is the cytoplasm. The catalysed reaction is [ThiS sulfur-carrier protein]-C-terminal-Gly-aminoethanethioate + 2-iminoacetate + 1-deoxy-D-xylulose 5-phosphate = [ThiS sulfur-carrier protein]-C-terminal Gly-Gly + 2-[(2R,5Z)-2-carboxy-4-methylthiazol-5(2H)-ylidene]ethyl phosphate + 2 H2O + H(+). It participates in cofactor biosynthesis; thiamine diphosphate biosynthesis. Functionally, catalyzes the rearrangement of 1-deoxy-D-xylulose 5-phosphate (DXP) to produce the thiazole phosphate moiety of thiamine. Sulfur is provided by the thiocarboxylate moiety of the carrier protein ThiS. In vitro, sulfur can be provided by H(2)S. This is Thiazole synthase from Corynebacterium urealyticum (strain ATCC 43042 / DSM 7109).